The primary structure comprises 365 residues: Transcription elongation factor, mitochondrial (365 aa).

Residues 1–40 (MAWRANLACLIKAGGRTRWFPLPEYLSMSPVLHNTCSRRK) constitute a mitochondrion transit peptide.

The protein belongs to the TEFM family. As to quaternary structure, interacts with POLRMT.

The protein resides in the mitochondrion matrix. The protein localises to the mitochondrion nucleoid. Its function is as follows. Transcription elongation factor which increases mitochondrial RNA polymerase processivity. Regulates transcription of the mitochondrial genome, including genes important for the oxidative phosphorylation machinery. This Rattus norvegicus (Rat) protein is Transcription elongation factor, mitochondrial (Tefm).